The sequence spans 386 residues: Patatin (386 aa).

Residues 1–23 (MATTKSFLILFFMILATTSSTCA) form the signal peptide. Positions 32–229 (LSIDGGGIKG…TVGDPALLSL (198 aa)) constitute a PNPLA domain. A GXGXXG motif is present at residues 36–41 (GGGIKG). The GXSXG signature appears at 75–79 (GTSTG). Catalysis depends on Ser-77, which acts as the Nucleophile. Residue Asn-115 is glycosylated (N-linked (GlcNAc...) asparagine). The active-site Proton acceptor is Asp-215. The DGA/G signature appears at 215 to 217 (DGA).

It belongs to the patatin family.

Its subcellular location is the vacuole. Probable lipolytic acyl hydrolase (LAH), an activity which is thought to be involved in the response of tubers to pathogens. This is Patatin from Solanum tuberosum (Potato).